The following is a 312-amino-acid chain: Ribosomal RNA small subunit methyltransferase H (312 aa).

Residues 38–40 (GGH), Asp-58, Phe-84, Asp-104, and Gln-111 contribute to the S-adenosyl-L-methionine site.

Belongs to the methyltransferase superfamily. RsmH family.

It localises to the cytoplasm. It catalyses the reaction cytidine(1402) in 16S rRNA + S-adenosyl-L-methionine = N(4)-methylcytidine(1402) in 16S rRNA + S-adenosyl-L-homocysteine + H(+). Its function is as follows. Specifically methylates the N4 position of cytidine in position 1402 (C1402) of 16S rRNA. This Alcanivorax borkumensis (strain ATCC 700651 / DSM 11573 / NCIMB 13689 / SK2) protein is Ribosomal RNA small subunit methyltransferase H.